The primary structure comprises 1771 residues: MGQELSQHERYVEQLKQALKTRGVKVKYADLLKFFDFVKDTCPWFPQEGTIDIKRWRRVGDCFQDYYNTFGPEKVPVTAFSYWNLIKELIDKKEVNPQVMAAVAQTEEILKSNSQTDLTKTSQNPDLDLISLDSDDEGAKSSSLQDKGLSSTKKPKRFPVLLTAQTSKDPEDPNPSEVDWDGLEDEAAKYHNPDWPPFLTRPPPYNKATPSAPTVMAVVNPKEELKEKIAQLEEQIKLEELHQALISKLQKLKTGNETVTHPDTAGGLSRTPHWPGQHIPKGKCCASREKEEQIPKDIFPVTETVDGQGQAWRHHNGFDFAVIKELKTAASQYGATAPYTLAIVESVADNWLTPTDWNTLVRAVLSGGDHLLWKSEFFENCRDTAKRNQQAGNGWDFDMLTGSGNYSSTDAQMQYDPGLFAQIQAAATKAWRKLPVKGDPGASLTGVKQGPDEPFADFVHRLITTAGRIFGSAEAGVDYVKQLAYENANPACQAAIRPYRKKTDLTGYIRLCSDIGPSYQQGLAMAAAFSGQTVKDFLNNKNKEKGGCCFKCGKKGHFAKNCHEHAHNNAEPKVPGLCPRCKRGKHWANECKSKTDNQGNPIPPHQGNRVEGPAPGPETSLWGSQLCSSQQKQPISKLTRATPGSAGLDLCSTSHTVLTPEMGPQALSTGIYGPLPPNTFGLILGRSSITMKGLQVYPGVIDNDYTGEIKIMAKAVNNIVTVSQGNRIAQLILLPLIETDNKVQQPYRGQGSFGSSDIYWVQPITCQKPSLTLWLDDKMFTGLIDTGADVTIIKLEDWPPNWPITDTLTNLRGIGQSNNPKQSSKYLTWRDKENNSGLIKPFVIPNLPVNLWGRDLLSQMKIMMCSPNDIVTAQMLAQGYSPGKGLGKKENGILHPIPNQGQSNKKGFGNFLTAAIDILAPQQCAEPITWKSDEPVWVDQWPLTNDKLAAAQQLVQEQLEAGHITESSSPWNTPIFVIKKKSGKWRLLQDLRAVNATMVLMGALQPGLPSPVAIPQGYLKIIIDLKDCFFSIPLHPSDQKRFAFSLPSTNFKEPMQRFQWKVLPQGMANSPTLCQKYVATAIHKVRHAWKQMYIIHYMDDILIAGKDGQQVLQCFDQLKQELTAAGLHIAPEKVQLQDPYTYLGFELNGPKITNQKAVIRKDKLQTLNDFQKLLGDINWLRPYLKLTTGDLKPLFDTLKGDSDPNSHRSLSKEALASLEKVETAIAEQFVTHINYSLPLIFLIFNTALTPTGLFWQDNPIMWIHLPASPKKVLLPYYDAIADLIILGRDHSKKYFGIEPSTIIQPYSKSQIDWLMQNTEMWPIACASFVGILDNHYPPNKLIQFCKLHTFVFPQIISKTPLNNALLVFTDGSSTGMAAYTLTDTTIKFQTNLNSAQLVELQALIAVLSAFPNQPLNIYTDSAYLAHSIPLLETVAQIKHISETAKLFLQCQQLIYNRSIPFYIGHVRAHSGLPGPIAQGNQRADLATKIVASNINTNLESAQNAHTLHHLNAQTLRLMFNIPREQARQIVKQCPICVTYLPVPHLGVNPRGLFPNMIWQMDVTHYSEFGNLKYIHVSIDTFSGFLLATLQTGETTKHVITHLLHCFSIIGLPKQIKTDNGPGYTSKNFQEFCSTLQIKHITGIPYNPQGQGIVERAHLSLKTTIEKIKKGEWYPRKGTPRNILNHALFILNFLNLDDQNKSAADRFWHNNPKKQFAMVKWKDPLDNTWHGPDPVLIWGRGSVCVYSQTYDAARWLPERLVRQVSNNNQSRE.

Gly2 is lipidated: N-myristoyl glycine; by host. A propeptide spanning residues 101 to 161 (AAVAQTEEIL…TKKPKRFPVL (61 aa)) is cleaved from the precursor. 2 stretches are compositionally biased toward polar residues: residues 113-125 (NSQT…SQNP) and 140-152 (KSSS…LSST). The tract at residues 113-178 (NSQTDLTKTS…DPEDPNPSEV (66 aa)) is disordered. Positions 202 to 205 (PPPY) match the PPXY motif motif. A PTAP/PSAP motif motif is present at residues 210 to 213 (PSAP). Residues 216 to 257 (MAVVNPKEELKEKIAQLEEQIKLEELHQALISKLQKLKTGNE) adopt a coiled-coil conformation. The tract at residues 260–279 (THPDTAGGLSRTPHWPGQHI) is disordered. A PTAP/PSAP motif motif is present at residues 335 to 338 (ATAP). 2 consecutive CCHC-type zinc fingers follow at residues 547–564 (GCCF…NCHE) and 576–593 (GLCP…ECKS). Positions 592–626 (KSKTDNQGNPIPPHQGNRVEGPAPGPETSLWGSQL) are disordered. One can recognise a Peptidase A2 domain in the interval 780 to 856 (FTGLIDTGAD…LPVNLWGRDL (77 aa)). Catalysis depends on Asp785, which acts as the Protease; shared with dimeric partner. A G-patch domain is found at 867–913 (PNDIVTAQMLAQGYSPGKGLGKKENGILHPIPNQGQSNKKGFGNFLT). Residues 959-1147 (LEAGHITESS…DPYTYLGFEL (189 aa)) form the Reverse transcriptase domain. 7 residues coordinate Mg(2+): Asp1024, Asp1099, Asp1100, Asp1370, Glu1399, Asp1420, and Asp1484. Residues 1361–1492 (LNNALLVFTD…ADLATKIVAS (132 aa)) form the RNase H type-1 domain. Residues 1496 to 1537 (TNLESAQNAHTLHHLNAQTLRLMFNIPREQARQIVKQCPICV) form an Integrase-type zinc finger. Zn(2+)-binding residues include His1505, His1509, Cys1533, and Cys1536. The Integrase catalytic domain occupies 1550-1719 (RGLFPNMIWQ…NPKKQFAMVK (170 aa)). Asp1561, Asp1618, and Glu1654 together coordinate Mg(2+). The integrase-type DNA-binding region spans 1716-1765 (AMVKWKDPLDNTWHGPDPVLIWGRGSVCVYSQTYDAARWLPERLVRQVSN).

This sequence belongs to the retroviral Pol polyprotein family. Homodimer. As to quaternary structure, interacts with the G-patch peptide. In terms of assembly, interacts with the reverse transcriptase/ribonuclease H. Homotrimer. Mg(2+) serves as cofactor. In terms of processing, released by autocatalytic processing. The protease can undergo further autoprocessing to yield 2 shorter but enzymatically active forms of 12 kDa and 13 kDa. Post-translationally, myristoylated. Myristoylation of the matrix (MA) domain mediates the transport and binding of Gag polyproteins to the host plasma membrane and is required for the assembly of viral particles. Specific enzymatic cleavages in vivo yield mature proteins.

Its subcellular location is the virion. It catalyses the reaction DNA(n) + a 2'-deoxyribonucleoside 5'-triphosphate = DNA(n+1) + diphosphate. It carries out the reaction Endonucleolytic cleavage to 5'-phosphomonoester.. The catalysed reaction is dUTP + H2O = dUMP + diphosphate + H(+). In terms of biological role, matrix protein. Nucleocapsid protein p14: Nucleocapsid protein. Functionally, capsid protein. Its function is as follows. The aspartyl protease mediates proteolytic cleavages of Gag and Gag-Pol polyproteins during or shortly after the release of the virion from the plasma membrane. Cleavages take place as an ordered, step-wise cascade to yield mature proteins. This process is called maturation. Displays maximal activity during the budding process just prior to particle release from the cell. In terms of biological role, enhances the activity of the reverse transcriptase. May be part of the mature RT. RT is a multifunctional enzyme that converts the viral dimeric RNA genome into dsDNA in the cytoplasm, shortly after virus entry into the cell. This enzyme displays a DNA polymerase activity that can copy either DNA or RNA templates, and a ribonuclease H (RNase H) activity that cleaves the RNA strand of RNA-DNA heteroduplexes in a partially processive 3' to 5' endonucleasic mode. Conversion of viral genomic RNA into dsDNA requires many steps. A tRNA binds to the primer-binding site (PBS) situated at the 5' end of the viral RNA. RT uses the 3' end of the tRNA primer to perfom a short round of RNA-dependent minus-strand DNA synthesis. The reading proceeds through the U5 region and ends after the repeated (R) region which is present at both ends of viral RNA. The portion of the RNA-DNA heteroduplex is digested by the RNase H, resulting in a ssDNA product attached to the tRNA primer. This ssDNA/tRNA hybridizes with the identical R region situated at the 3' end of viral RNA. This template exchange, known as minus-strand DNA strong stop transfer, can be either intra- or intermolecular. RT uses the 3' end of this newly synthesized short ssDNA to perfom the RNA-dependent minus-strand DNA synthesis of the whole template. RNase H digests the RNA template except for a polypurine tract (PPT) situated at the 5' end of the genome. It is not clear if both polymerase and RNase H activities are simultaneous. RNase H probably can proceed both in a polymerase-dependent (RNA cut into small fragments by the same RT performing DNA synthesis) and a polymerase-independent mode (cleavage of remaining RNA fragments by free RTs). Secondly, RT performs DNA-directed plus-strand DNA synthesis using the PPT that has not been removed by RNase H as primers. PPT and tRNA primers are then removed by RNase H. The 3' and 5' ssDNA PBS regions hybridize to form a circular dsDNA intermediate. Strand displacement synthesis by RT to the PBS and PPT ends produces a blunt ended, linear dsDNA copy of the viral genome that includes long terminal repeats (LTRs) at both ends. Functionally, catalyzes viral DNA integration into the host chromosome, by performing a series of DNA cutting and joining reactions. In Macaca mulatta (Rhesus macaque), this protein is Gag-Pro-Pol polyprotein (gag-pro-pol).